Reading from the N-terminus, the 314-residue chain is Inactive protein FRIGIDA (314 aa).

Over residues 1–18 (MSNYPPTVAAQPTTTANP) the composition is skewed to low complexity. The interval 1 to 31 (MSNYPPTVAAQPTTTANPLLQRHQSEQRRRE) is disordered. Positions 67-97 (VAVETFKRQFDDLQKHIESIENAIDSKLESN) form a coiled coil.

It belongs to the Frigida family.

It is found in the nucleus. This is Inactive protein FRIGIDA (FRI) from Arabidopsis thaliana (Mouse-ear cress).